The chain runs to 278 residues: Putative phosphoenolpyruvate synthase regulatory protein (278 aa).

An ADP-binding site is contributed by 158 to 165 (GVSRSGKT).

Belongs to the pyruvate, phosphate/water dikinase regulatory protein family. PSRP subfamily.

It catalyses the reaction [pyruvate, water dikinase] + ADP = [pyruvate, water dikinase]-phosphate + AMP + H(+). The enzyme catalyses [pyruvate, water dikinase]-phosphate + phosphate + H(+) = [pyruvate, water dikinase] + diphosphate. Functionally, bifunctional serine/threonine kinase and phosphorylase involved in the regulation of the phosphoenolpyruvate synthase (PEPS) by catalyzing its phosphorylation/dephosphorylation. The polypeptide is Putative phosphoenolpyruvate synthase regulatory protein (Acinetobacter baylyi (strain ATCC 33305 / BD413 / ADP1)).